Reading from the N-terminus, the 178-residue chain is Oligoribonuclease (178 aa).

Residues 7–168 enclose the Exonuclease domain; the sequence is LIWIDLEMTG…DDIRESIAEL (162 aa). Tyr-128 is a catalytic residue.

It belongs to the oligoribonuclease family.

The protein localises to the cytoplasm. Its function is as follows. 3'-to-5' exoribonuclease specific for small oligoribonucleotides. The chain is Oligoribonuclease from Francisella tularensis subsp. holarctica (strain FTNF002-00 / FTA).